A 511-amino-acid polypeptide reads, in one-letter code: Cobyric acid synthase (511 aa).

The 193-residue stretch at 251 to 443 (LLDIAIICLP…IHGIFDNDVF (193 aa)) folds into the GATase cobBQ-type domain. Catalysis depends on cysteine 332, which acts as the Nucleophile. Residue histidine 435 is part of the active site.

The protein belongs to the CobB/CobQ family. CobQ subfamily.

It functions in the pathway cofactor biosynthesis; adenosylcobalamin biosynthesis. Functionally, catalyzes amidations at positions B, D, E, and G on adenosylcobyrinic A,C-diamide. NH(2) groups are provided by glutamine, and one molecule of ATP is hydrogenolyzed for each amidation. The polypeptide is Cobyric acid synthase (Listeria monocytogenes serotype 4a (strain HCC23)).